The following is a 745-amino-acid chain: Cytoskeleton-associated protein 2-like (745 aa).

4 disordered regions span residues 26 to 305 (KGKL…VNRV), 319 to 362 (PATE…LGPQ), 422 to 483 (FPPQ…TYKR), and 608 to 638 (EAVT…PCPS). Composition is skewed to polar residues over residues 67–89 (SKTT…ASQK) and 101–136 (GLTS…SRNP). Positions 183 to 185 (KEN) match the KEN box motif. Basic and acidic residues predominate over residues 192 to 202 (KPEKPDPELHS). Lysine 195 participates in a covalent cross-link: Glycyl lysine isopeptide (Lys-Gly) (interchain with G-Cter in SUMO1); alternate. Residue lysine 195 forms a Glycyl lysine isopeptide (Lys-Gly) (interchain with G-Cter in SUMO2); alternate linkage. Polar residues-rich tracts occupy residues 205-216 (KPNTGSSNQTQK), 224-233 (LSKSSVTQTA), 242-253 (FIRNTQIRTQAV), and 284-301 (NKTQ…QDIT). Polar residues predominate over residues 427–442 (HFLNKTAPRTQASTAA). Residues 459–475 (KKPEGEDRRKQLEEWQK) show a composition bias toward basic and acidic residues. Over residues 608-624 (EAVTSDTSAAGTNTTSA) the composition is skewed to polar residues. Residue serine 745 is modified to Phosphoserine.

The protein belongs to the CKAP2 family. Post-translationally, ubiquitinated by the anaphase promoting complex/cyclosome (APC/C). As to expression, highly expressed in regions of active neurogenesis and neural stem/progenitor cells (NSPCs), both embryonic and adult, not detected in lung, liver, kidney, heart, and skeletal muscle.

The protein resides in the cytoplasm. It is found in the cytoskeleton. The protein localises to the spindle pole. Microtubule-associated protein required for mitotic spindle formation and cell-cycle progression in neural progenitor cells. This is Cytoskeleton-associated protein 2-like (Ckap2l) from Mus musculus (Mouse).